A 211-amino-acid chain; its full sequence is C-type lectin domain family 2 member L (211 aa).

A disordered region spans residues 1-53; sequence MEPAREPPARARPPPPAARPAPAAPRPRSPAEAEARGPEGLLRRSGSGYEGST. Pro residues predominate over residues 10–28; sequence RARPPPPAARPAPAAPRPR. A Phosphoserine modification is found at serine 29. A helical transmembrane segment spans residues 66-86; sequence LLLGAIAVLLFAILVVMSILA. Residues 104-206 enclose the C-type lectin domain; that stretch reads YGRKCYYFSE…CLTTRPWVCS (103 aa). 2 disulfide bridges follow: cysteine 125/cysteine 205 and cysteine 184/cysteine 197.

Its subcellular location is the membrane. The chain is C-type lectin domain family 2 member L (Clec2l) from Mus musculus (Mouse).